The primary structure comprises 482 residues: Probable glycine dehydrogenase (decarboxylating) subunit 2 (482 aa).

Lysine 267 carries the N6-(pyridoxal phosphate)lysine modification.

This sequence belongs to the GcvP family. C-terminal subunit subfamily. The glycine cleavage system is composed of four proteins: P, T, L and H. In this organism, the P 'protein' is a heterodimer of two subunits. Requires pyridoxal 5'-phosphate as cofactor.

The catalysed reaction is N(6)-[(R)-lipoyl]-L-lysyl-[glycine-cleavage complex H protein] + glycine + H(+) = N(6)-[(R)-S(8)-aminomethyldihydrolipoyl]-L-lysyl-[glycine-cleavage complex H protein] + CO2. In terms of biological role, the glycine cleavage system catalyzes the degradation of glycine. The P protein binds the alpha-amino group of glycine through its pyridoxal phosphate cofactor; CO(2) is released and the remaining methylamine moiety is then transferred to the lipoamide cofactor of the H protein. This Aquifex aeolicus (strain VF5) protein is Probable glycine dehydrogenase (decarboxylating) subunit 2.